The following is a 1936-amino-acid chain: Potassium channel K1 (1936 aa).

6 consecutive transmembrane segments (helical) span residues 175 to 195 (IIILYIIMLEFGSMLISYILL), 598 to 618 (VWIIAILIRIILWCIVWLWAA), 643 to 663 (GYIECTFQWCGVLDYLFGLYF), 670 to 690 (YIFSFFSLIDFITTPVSSFIM), 701 to 721 (TYWFLILGPLRFLRLVRAEST), and 734 to 754 (IIIIGIIILSLAILFTFSGIM). The segment at residues 772–788 (FVYFGVITMSTVGYGDY) is an intramembrane region (pore-forming). Residues 791 to 811 (VTPAGKCLTMFIIVTCFTFVG) traverse the membrane as a helical segment. A coiled-coil region spans residues 1141-1185 (DTSSMINYKSKSRVNYKMVKGTKNEFIRNQNYNINSIYYANNDNM).

The protein localises to the membrane. The catalysed reaction is K(+)(in) = K(+)(out). Partially inhibited by Ba(2+) and quinine. Probably insensitive to tetraethylammonium (TEA). Its function is as follows. Likely a predominant potassium channel in the erythrocytic stages of parasites. Mediates transmembrane potassium transport. Required for the development of oocysts in the mosquito midgut. The protein is Potassium channel K1 of Plasmodium berghei (strain Anka).